Reading from the N-terminus, the 187-residue chain is Large ribosomal subunit protein mL49 (187 aa).

Belongs to the mitochondrion-specific ribosomal protein mL49 family.

The protein localises to the mitochondrion. In Caenorhabditis elegans, this protein is Large ribosomal subunit protein mL49 (mrpl-49).